Consider the following 360-residue polypeptide: Magnesium transporter NIPA2 (360 aa).

The Extracellular segment spans residues 1–9 (MSQGRGKYD). The chain crosses the membrane as a helical span at residues 10-30 (FYIGLGLAMSSSIFIGGSFIL). Topologically, residues 31 to 56 (KKKGLLRLARKGSMRAGQGGHAYLKE) are cytoplasmic. Residues 57-77 (WLWWAGLLSMGAGEVANFAAY) traverse the membrane as a helical segment. Position 78 (Ala-78) is a topological domain, extracellular. The helical transmembrane segment at 79–99 (FAPATLVTPLGALSVLVSAIL) threads the bilayer. Topologically, residues 100–107 (SSYFLNER) are cytoplasmic. A helical membrane pass occupies residues 108–128 (LNLHGKIGCLLSILGSTVMVI). The Extracellular segment spans residues 129–149 (HAPKEEEIETLNEMSHKLGDP). The helical transmembrane segment at 150–170 (GFVVFATLVVIVALILIFVVG) threads the bilayer. Residues 171-175 (PRHGQ) are Cytoplasmic-facing. A helical membrane pass occupies residues 176–196 (TNILVYITICSVIGAFSVSCV). Over 197 to 215 (KGLGIAIKELFAGKPVLRH) the chain is Extracellular. A helical transmembrane segment spans residues 216-236 (PLAWILLLSLIVCVSTQINYL). Residues 237–246 (NRALDIFNTS) lie on the Cytoplasmic side of the membrane. The helical transmembrane segment at 247-267 (IVTPIYYVFFTTSVLTCSAIL) threads the bilayer. Topologically, residues 268 to 278 (FKEWQDMPVDD) are extracellular. Residues 279-299 (VIGTLSGFFTIIVGIFLLHAF) form a helical membrane-spanning segment. Topologically, residues 300–360 (KDVSFSLASL…SRRNGNLTAF (61 aa)) are cytoplasmic.

It belongs to the NIPA family. Widely expressed.

Its subcellular location is the cell membrane. The protein resides in the early endosome. The catalysed reaction is Mg(2+)(in) = Mg(2+)(out). Functionally, acts as a selective Mg(2+) transporter. The chain is Magnesium transporter NIPA2 (NIPA2) from Homo sapiens (Human).